Consider the following 61-residue polypeptide: Inner membrane protein p12 (61 aa).

A helical membrane pass occupies residues 16–36 (LLIVAIIVVIMAIMLYYFWWM).

This sequence belongs to the asfivirus inner membrane protein p12 family. As to quaternary structure, homomultimer; disulfide-linked. Post-translationally, not glycosylated.

Its subcellular location is the virion membrane. This Ornithodoros (relapsing fever ticks) protein is Inner membrane protein p12.